The chain runs to 268 residues: uncharacterized protein (268 aa).

Belongs to the glycosyltransferase 2 family.

This is an uncharacterized protein from Bacillus subtilis (strain 168).